The sequence spans 301 residues: GTPase Era (301 aa).

The Era-type G domain maps to 7–175 (YCGFIAIVGR…AAIVRKHLPE (169 aa)). Residues 15–22 (GRPNVGKS) form a G1 region. Residue 15-22 (GRPNVGKS) participates in GTP binding. The tract at residues 41–45 (QTTRH) is G2. Residues 62–65 (DTPG) are G3. GTP contacts are provided by residues 62-66 (DTPGL) and 124-127 (NKVD). Positions 124–127 (NKVD) are G4. The segment at 154 to 156 (ISA) is G5. The KH type-2 domain maps to 206–283 (LGAELPYSVT…HLELWVKVKS (78 aa)).

This sequence belongs to the TRAFAC class TrmE-Era-EngA-EngB-Septin-like GTPase superfamily. Era GTPase family. As to quaternary structure, monomer.

It is found in the cytoplasm. Its subcellular location is the cell inner membrane. Functionally, an essential GTPase that binds both GDP and GTP, with rapid nucleotide exchange. Plays a role in 16S rRNA processing and 30S ribosomal subunit biogenesis and possibly also in cell cycle regulation and energy metabolism. The sequence is that of GTPase Era from Cronobacter sakazakii (strain ATCC BAA-894) (Enterobacter sakazakii).